The sequence spans 275 residues: 3-methyl-2-oxobutanoate hydroxymethyltransferase (275 aa).

Asp44 and Asp83 together coordinate Mg(2+). Residues 44–45 (DS), Asp83, and Lys113 contribute to the 3-methyl-2-oxobutanoate site. Mg(2+) is bound at residue Glu115. Glu182 (proton acceptor) is an active-site residue.

This sequence belongs to the PanB family. In terms of assembly, homodecamer; pentamer of dimers. The cofactor is Mg(2+).

The protein resides in the cytoplasm. The enzyme catalyses 3-methyl-2-oxobutanoate + (6R)-5,10-methylene-5,6,7,8-tetrahydrofolate + H2O = 2-dehydropantoate + (6S)-5,6,7,8-tetrahydrofolate. It participates in cofactor biosynthesis; (R)-pantothenate biosynthesis; (R)-pantoate from 3-methyl-2-oxobutanoate: step 1/2. Functionally, catalyzes the reversible reaction in which hydroxymethyl group from 5,10-methylenetetrahydrofolate is transferred onto alpha-ketoisovalerate to form ketopantoate. The polypeptide is 3-methyl-2-oxobutanoate hydroxymethyltransferase (Enterococcus faecalis (strain ATCC 700802 / V583)).